Here is a 244-residue protein sequence, read N- to C-terminus: NAD-dependent protein deacylase SIR2rp3 (244 aa).

The region spanning 1–239 (MRRPNGMIAI…PAWADEVLHG (239 aa)) is the Deacetylase sirtuin-type domain. Residue 13–32 (GAGISAESGISTFRDQNGLW) coordinates NAD(+). Substrate-binding residues include Tyr57 and Arg60. 95 to 98 (QNID) lines the NAD(+) pocket. The active-site Proton acceptor is the His113. Residues Cys121 and Cys141 each contribute to the Zn(2+) site. NAD(+)-binding positions include 181–183 (GTS) and Ala225.

This sequence belongs to the sirtuin family. Class III subfamily. Zn(2+) serves as cofactor.

The protein localises to the mitochondrion. The enzyme catalyses N(6)-malonyl-L-lysyl-[protein] + NAD(+) + H2O = 2''-O-malonyl-ADP-D-ribose + nicotinamide + L-lysyl-[protein]. It carries out the reaction N(6)-succinyl-L-lysyl-[protein] + NAD(+) + H2O = 2''-O-succinyl-ADP-D-ribose + nicotinamide + L-lysyl-[protein]. The catalysed reaction is N(6)-glutaryl-L-lysyl-[protein] + NAD(+) + H2O = 2''-O-glutaryl-ADP-D-ribose + nicotinamide + L-lysyl-[protein]. Its function is as follows. NAD-dependent lysine demalonylase, desuccinylase and deglutarylase that specifically removes malonyl, succinyl and glutaryl groups on target proteins. Has weak NAD-dependent protein deacetylase activity; however this activity may not be physiologically relevant in vivo. The polypeptide is NAD-dependent protein deacylase SIR2rp3 (SIR2rp3) (Trypanosoma brucei brucei (strain 927/4 GUTat10.1)).